We begin with the raw amino-acid sequence, 232 residues long: 2,3,4,5-tetrahydropyridine-2,6-dicarboxylate N-acetyltransferase (232 aa).

It belongs to the transferase hexapeptide repeat family. DapH subfamily.

The catalysed reaction is (S)-2,3,4,5-tetrahydrodipicolinate + acetyl-CoA + H2O = L-2-acetamido-6-oxoheptanedioate + CoA. Its pathway is amino-acid biosynthesis; L-lysine biosynthesis via DAP pathway; LL-2,6-diaminopimelate from (S)-tetrahydrodipicolinate (acetylase route): step 1/3. Functionally, catalyzes the transfer of an acetyl group from acetyl-CoA to tetrahydrodipicolinate. This Streptococcus gordonii (strain Challis / ATCC 35105 / BCRC 15272 / CH1 / DL1 / V288) protein is 2,3,4,5-tetrahydropyridine-2,6-dicarboxylate N-acetyltransferase.